The primary structure comprises 489 residues: Probable transporter MCH1 (489 aa).

Transmembrane regions (helical) follow at residues 34 to 54 (ISLI…FTPV), 68 to 88 (IIGS…GYLA), 94 to 114 (VLLS…AATV), 124 to 144 (LAIS…TALL), 156 to 175 (LTIS…GSRV), 196 to 216 (FSFL…VVSI), 262 to 282 (ISTY…EMYI), 302 to 324 (VAIH…DFLV), 335 to 355 (LLSI…STFV), 359 to 379 (YYII…LYPT), 403 to 423 (IGST…CGVF), and 463 to 483 (SLII…ILRI).

It belongs to the major facilitator superfamily.

The protein localises to the vacuole membrane. Probable transporter. This chain is Probable transporter MCH1 (MCH1), found in Wickerhamomyces anomalus (Yeast).